Reading from the N-terminus, the 312-residue chain is Ribosomal RNA small subunit methyltransferase H (312 aa).

S-adenosyl-L-methionine contacts are provided by residues 35-37, Asp-55, Phe-79, Asp-101, and Gln-108; that span reads GGH.

Belongs to the methyltransferase superfamily. RsmH family.

The protein localises to the cytoplasm. The catalysed reaction is cytidine(1402) in 16S rRNA + S-adenosyl-L-methionine = N(4)-methylcytidine(1402) in 16S rRNA + S-adenosyl-L-homocysteine + H(+). Specifically methylates the N4 position of cytidine in position 1402 (C1402) of 16S rRNA. This is Ribosomal RNA small subunit methyltransferase H from Buchnera aphidicola subsp. Acyrthosiphon pisum (strain APS) (Acyrthosiphon pisum symbiotic bacterium).